A 117-amino-acid polypeptide reads, in one-letter code: Transcription elongation factor A protein-like 8 (117 aa).

A disordered region spans residues 1–81 (MQKSCDENEG…PEEVIRGVDE (81 aa)). The segment covering 41–81 (NVREETDGSLRGEPAEPSPEPKEDTPARHLNPEEVIRGVDE) has biased composition (basic and acidic residues). Residues 73-100 (EEVIRGVDELERLREEIRRVRNKFVLMH) are a coiled coil.

This sequence belongs to the TFS-II family. TFA subfamily. Highly expressed in kidney. Moderately expressed in heart and lung. Low expression in brain and liver. Expression is up-regulated in nephrectomized kidney.

The protein localises to the nucleus. Its function is as follows. May be involved in transcriptional regulation. This chain is Transcription elongation factor A protein-like 8 (Tceal8), found in Rattus norvegicus (Rat).